Reading from the N-terminus, the 423-residue chain is Flotillin-1 (423 aa).

This sequence belongs to the band 7/mec-2 family. Flotillin subfamily. Heterooligomeric complex of flotillin-1 and flotillin-2 and caveolin-1 and caveolin-2. Normally expressed in growing retinal exons of newly differentiated ganglion cells at the retinal margin. After optic nerve injury, expressed in all retinal ganglion cells and retinal axons. Also expressed in endothelial cells, spinal cord, larval and adult skin, muscle processes, thymus and gill macrophages.

The protein localises to the cell membrane. It localises to the endosome. Its subcellular location is the membrane. It is found in the caveola. The protein resides in the melanosome. The protein localises to the membrane raft. In terms of biological role, may act as a scaffolding protein within caveolar membranes, functionally participating in formation of caveolae or caveolae-like vesicles. The sequence is that of Flotillin-1 (flot1) from Carassius auratus (Goldfish).